The sequence spans 683 residues: Glycine--tRNA ligase beta subunit (683 aa).

This sequence belongs to the class-II aminoacyl-tRNA synthetase family. In terms of assembly, tetramer of two alpha and two beta subunits.

The protein localises to the cytoplasm. It carries out the reaction tRNA(Gly) + glycine + ATP = glycyl-tRNA(Gly) + AMP + diphosphate. The protein is Glycine--tRNA ligase beta subunit of Pseudomonas putida (strain W619).